Reading from the N-terminus, the 962-residue chain is Protease 3 (962 aa).

A signal peptide spans 1 to 23; the sequence is MPRSTWFKALLLLVALWGPAVQA. H88 is a Zn(2+) binding site. E91 (proton acceptor) is an active-site residue. Residues H92 and E169 each coordinate Zn(2+).

It belongs to the peptidase M16 family. In terms of assembly, monomer. It depends on Zn(2+) as a cofactor.

The protein localises to the periplasm. It carries out the reaction Preferential cleavage of 16-Tyr-|-Leu-17 and 25-Phe-|-Tyr-26 bonds of oxidized insulin B chain. Also acts on other substrates of Mw less than 7 kDa such as insulin and glucagon.. Endopeptidase that degrades small peptides of less than 7 kDa, such as glucagon and insulin. This Salmonella typhimurium (strain LT2 / SGSC1412 / ATCC 700720) protein is Protease 3 (ptrA).